A 283-amino-acid polypeptide reads, in one-letter code: Phosphatidylglycerol--prolipoprotein diacylglyceryl transferase (283 aa).

Helical transmembrane passes span 19 to 39 (IGPI…LIGV), 59 to 79 (LSIW…VLFQ), 90 to 110 (IIAI…GTLA), and 120 to 140 (VPFW…QAIG). Arg141 contacts a 1,2-diacyl-sn-glycero-3-phospho-(1'-sn-glycerol). Transmembrane regions (helical) follow at residues 181–201 (TFLY…TLFF), 212–232 (VGTL…WIEG), and 245–265 (IAQV…AWLY).

The protein belongs to the Lgt family.

The protein resides in the cell inner membrane. It carries out the reaction L-cysteinyl-[prolipoprotein] + a 1,2-diacyl-sn-glycero-3-phospho-(1'-sn-glycerol) = an S-1,2-diacyl-sn-glyceryl-L-cysteinyl-[prolipoprotein] + sn-glycerol 1-phosphate + H(+). It participates in protein modification; lipoprotein biosynthesis (diacylglyceryl transfer). Catalyzes the transfer of the diacylglyceryl group from phosphatidylglycerol to the sulfhydryl group of the N-terminal cysteine of a prolipoprotein, the first step in the formation of mature lipoproteins. The polypeptide is Phosphatidylglycerol--prolipoprotein diacylglyceryl transferase (Nostoc sp. (strain PCC 7120 / SAG 25.82 / UTEX 2576)).